Consider the following 337-residue polypeptide: Heme A synthase (337 aa).

Transmembrane regions (helical) follow at residues 6–26, 87–107, 119–139, 154–174, and 192–212; these read ITKWLFVSCIMVIAMVVIGGI, FIHRLLGRMTVLIYIVPLIYF, LPYIIALLLFCVQGFMGWYMV, LAFHLIIAVIIYHILFYQLIK, and LIFSGIAITVIYVQIFLGALV. His256 serves as a coordination point for heme. A run of 3 helical transmembrane segments spans residues 258–278, 285–305, and 308–328; these read LGSYSVFLVVVVLVICLLTIE, IAYFLMIALLMQISTGIITLL, and VPIIIASIHQLFAIILLSIII. Position 316 (His316) interacts with heme.

The protein belongs to the COX15/CtaA family. Type 2 subfamily. As to quaternary structure, interacts with CtaB. Requires heme b as cofactor.

Its subcellular location is the cell membrane. The catalysed reaction is Fe(II)-heme o + 2 A + H2O = Fe(II)-heme a + 2 AH2. It functions in the pathway porphyrin-containing compound metabolism; heme A biosynthesis; heme A from heme O: step 1/1. In terms of biological role, catalyzes the conversion of heme O to heme A by two successive hydroxylations of the methyl group at C8. The first hydroxylation forms heme I, the second hydroxylation results in an unstable dihydroxymethyl group, which spontaneously dehydrates, resulting in the formyl group of heme A. The polypeptide is Heme A synthase (Rickettsia akari (strain Hartford)).